Here is a 249-residue protein sequence, read N- to C-terminus: Coat protein (249 aa).

Residues 1–28 (MVDSKKTETPQVVDASKKAENSKTSQAG) are disordered.

The protein belongs to the potexvirus capsid protein family.

The protein localises to the virion. Functionally, required for genome encapsidation. Forms ribonucleoprotein complexes along with TGB1 helicase and viral RNA. In Solanum tuberosum (Potato), this protein is Coat protein.